The following is a 101-amino-acid chain: Small ribosomal subunit protein uS14 (101 aa).

The protein belongs to the universal ribosomal protein uS14 family. In terms of assembly, part of the 30S ribosomal subunit. Contacts proteins S3 and S10.

In terms of biological role, binds 16S rRNA, required for the assembly of 30S particles and may also be responsible for determining the conformation of the 16S rRNA at the A site. The protein is Small ribosomal subunit protein uS14 of Orientia tsutsugamushi (strain Boryong) (Rickettsia tsutsugamushi).